A 380-amino-acid polypeptide reads, in one-letter code: Cytochrome b (380 aa).

A run of 4 helical transmembrane segments spans residues 34 to 54 (FGSL…FLAM), 78 to 99 (WLLR…YFHI), 114 to 134 (WNIG…GYVL), and 179 to 199 (FFTF…INLL). His-84 and His-98 together coordinate heme b. Residue His-183 participates in heme b binding. His-202 is a binding site for a ubiquinone. 4 consecutive transmembrane segments (helical) span residues 227 to 247 (YKDL…STFA), 289 to 309 (LGGV…PIIH), 321 to 341 (IAKT…WIGG), and 348 to 368 (FITI…LLIP).

Belongs to the cytochrome b family. As to quaternary structure, the cytochrome bc1 complex contains 3 respiratory subunits (MT-CYB, CYC1 and UQCRFS1), 2 core proteins (UQCRC1 and UQCRC2) and probably 6 low-molecular weight proteins. Heme b serves as cofactor.

Its subcellular location is the mitochondrion inner membrane. Its function is as follows. Component of the ubiquinol-cytochrome c reductase complex (complex III or cytochrome b-c1 complex) that is part of the mitochondrial respiratory chain. The b-c1 complex mediates electron transfer from ubiquinol to cytochrome c. Contributes to the generation of a proton gradient across the mitochondrial membrane that is then used for ATP synthesis. In Pelophylax plancyi (Korean pond frog), this protein is Cytochrome b (mt-cyb).